The sequence spans 495 residues: Glycerol kinase (495 aa).

Thr13 is a binding site for ADP. 3 residues coordinate ATP: Thr13, Thr14, and Ser15. Residue Thr13 coordinates sn-glycerol 3-phosphate. Arg17 is a binding site for ADP. 4 residues coordinate sn-glycerol 3-phosphate: Arg83, Glu84, Tyr135, and Asp244. Residues Arg83, Glu84, Tyr135, Asp244, and Gln245 each contribute to the glycerol site. Residues Thr266 and Gly309 each contribute to the ADP site. Thr266, Gly309, Gln313, and Gly410 together coordinate ATP. ADP-binding residues include Gly410 and Asn414.

The protein belongs to the FGGY kinase family.

It carries out the reaction glycerol + ATP = sn-glycerol 3-phosphate + ADP + H(+). It functions in the pathway polyol metabolism; glycerol degradation via glycerol kinase pathway; sn-glycerol 3-phosphate from glycerol: step 1/1. With respect to regulation, inhibited by fructose 1,6-bisphosphate (FBP). Its function is as follows. Key enzyme in the regulation of glycerol uptake and metabolism. Catalyzes the phosphorylation of glycerol to yield sn-glycerol 3-phosphate. This is Glycerol kinase from Shewanella sediminis (strain HAW-EB3).